A 108-amino-acid polypeptide reads, in one-letter code: Thiosulfate sulfurtransferase GlpE (108 aa).

The 89-residue stretch at 17–105 folds into the Rhodanese domain; that stretch reads HQGAAVLVDI…WHRRFPADVA (89 aa). Catalysis depends on C65, which acts as the Cysteine persulfide intermediate.

This sequence belongs to the GlpE family.

The protein resides in the cytoplasm. It catalyses the reaction thiosulfate + hydrogen cyanide = thiocyanate + sulfite + 2 H(+). It carries out the reaction thiosulfate + [thioredoxin]-dithiol = [thioredoxin]-disulfide + hydrogen sulfide + sulfite + 2 H(+). Transferase that catalyzes the transfer of sulfur from thiosulfate to thiophilic acceptors such as cyanide or dithiols. May function in a CysM-independent thiosulfate assimilation pathway by catalyzing the conversion of thiosulfate to sulfite, which can then be used for L-cysteine biosynthesis. This Salmonella choleraesuis (strain SC-B67) protein is Thiosulfate sulfurtransferase GlpE.